The following is a 466-amino-acid chain: Ribulose bisphosphate carboxylase large chain (466 aa).

Lys-4 carries the post-translational modification N6,N6,N6-trimethyllysine. Substrate contacts are provided by Asn-113 and Thr-163. The active-site Proton acceptor is the Lys-165. Residue Lys-167 participates in substrate binding. Residues Lys-191, Asp-193, and Glu-194 each coordinate Mg(2+). Lys-191 is modified (N6-carboxylysine). His-284 functions as the Proton acceptor in the catalytic mechanism. Residues Arg-285, His-317, and Ser-369 each coordinate substrate.

This sequence belongs to the RuBisCO large chain family. Type I subfamily. In terms of assembly, heterohexadecamer of 8 large chains and 8 small chains; disulfide-linked. The disulfide link is formed within the large subunit homodimers. Requires Mg(2+) as cofactor. The disulfide bond which can form in the large chain dimeric partners within the hexadecamer appears to be associated with oxidative stress and protein turnover.

The protein localises to the plastid. The protein resides in the chloroplast. The enzyme catalyses 2 (2R)-3-phosphoglycerate + 2 H(+) = D-ribulose 1,5-bisphosphate + CO2 + H2O. It catalyses the reaction D-ribulose 1,5-bisphosphate + O2 = 2-phosphoglycolate + (2R)-3-phosphoglycerate + 2 H(+). Functionally, ruBisCO catalyzes two reactions: the carboxylation of D-ribulose 1,5-bisphosphate, the primary event in carbon dioxide fixation, as well as the oxidative fragmentation of the pentose substrate in the photorespiration process. Both reactions occur simultaneously and in competition at the same active site. This is Ribulose bisphosphate carboxylase large chain from Barleria prionitis (Porcupine flower).